The sequence spans 351 residues: Nicotinate-nucleotide--dimethylbenzimidazole phosphoribosyltransferase (351 aa).

Glu-317 serves as the catalytic Proton acceptor.

This sequence belongs to the CobT family.

The catalysed reaction is 5,6-dimethylbenzimidazole + nicotinate beta-D-ribonucleotide = alpha-ribazole 5'-phosphate + nicotinate + H(+). It functions in the pathway nucleoside biosynthesis; alpha-ribazole biosynthesis; alpha-ribazole from 5,6-dimethylbenzimidazole: step 1/2. Its function is as follows. Catalyzes the synthesis of alpha-ribazole-5'-phosphate from nicotinate mononucleotide (NAMN) and 5,6-dimethylbenzimidazole (DMB). This Pseudomonas aeruginosa (strain UCBPP-PA14) protein is Nicotinate-nucleotide--dimethylbenzimidazole phosphoribosyltransferase.